Consider the following 213-residue polypeptide: 2,3-bisphosphoglycerate-dependent phosphoglycerate mutase (213 aa).

Residues 8 to 15, 21 to 22, R58, 84 to 87, K95, 111 to 112, and 155 to 156 contribute to the substrate site; these read RHGQSEWN, TG, ERNY, RR, and GN. The Tele-phosphohistidine intermediate role is filled by H9. E84 serves as the catalytic Proton donor/acceptor.

The protein belongs to the phosphoglycerate mutase family. BPG-dependent PGAM subfamily.

The enzyme catalyses (2R)-2-phosphoglycerate = (2R)-3-phosphoglycerate. The protein operates within carbohydrate degradation; glycolysis; pyruvate from D-glyceraldehyde 3-phosphate: step 3/5. Functionally, catalyzes the interconversion of 2-phosphoglycerate and 3-phosphoglycerate. The sequence is that of 2,3-bisphosphoglycerate-dependent phosphoglycerate mutase from Cytophaga hutchinsonii (strain ATCC 33406 / DSM 1761 / CIP 103989 / NBRC 15051 / NCIMB 9469 / D465).